A 145-amino-acid chain; its full sequence is Cystin-1 (145 aa).

A disordered region spans residues 1-129 (MGSGSSRSGR…PEGQSAISYD (129 aa)). Glycine 2 carries the N-myristoyl glycine lipid modification. The Ciliary targeting motif motif lies at 29-33 (ASEGG). Residue serine 116 is modified to Phosphoserine.

As to quaternary structure, interacts (when myristoylated) with UNC119 and UNC119B; interaction is required for localization to cilium. In terms of tissue distribution, expressed primarily in the kidney and liver. Expressed at lower levels in the lung, brain and heart.

It localises to the cell projection. Its subcellular location is the cilium membrane. The protein resides in the cytoplasm. The protein localises to the cytoskeleton. It is found in the cilium axoneme. In Mus musculus (Mouse), this protein is Cystin-1 (Cys1).